The following is a 322-amino-acid chain: Deoxyhypusine hydroxylase (322 aa).

2 HEAT-like PBS-type repeats span residues 76-102 and 109-135; these read LKHEVAYVLGQTKNMAGAPLLRDVLAD and VRHEAAEALGALNDVDSLDILEKYFKE. Positions 78, 79, 111, 112, 236, 237, 269, and 270 each coordinate Fe cation. The HEAT-like PBS-type 3 repeat unit spans residues 267–293; the sequence is VRHEAAEALGSIATDDVLPVLKEHLKD.

Belongs to the deoxyhypusine hydroxylase family. Fe(2+) serves as cofactor.

It is found in the cytoplasm. The protein resides in the nucleus. The enzyme catalyses [eIF5A protein]-deoxyhypusine + AH2 + O2 = [eIF5A protein]-hypusine + A + H2O. It functions in the pathway protein modification; eIF5A hypusination. Its function is as follows. Catalyzes the hydroxylation of the N(6)-(4-aminobutyl)-L-lysine intermediate to form hypusine, an essential post-translational modification only found in mature eIF-5A factor. The sequence is that of Deoxyhypusine hydroxylase from Kluyveromyces lactis (strain ATCC 8585 / CBS 2359 / DSM 70799 / NBRC 1267 / NRRL Y-1140 / WM37) (Yeast).